A 733-amino-acid polypeptide reads, in one-letter code: Microtubule-associated protein tau (733 aa).

A compositionally biased stretch (basic and acidic residues) spans 1-16 (MADPRQEFDTMEDHAG). Positions 1–548 (MADPRQEFDT…PVPMPDLKNV (548 aa)) are disordered. Ala-2 is modified (N-acetylalanine). Tyr-18 bears the Phosphotyrosine; by FYN mark. Lys-33 participates in a covalent cross-link: Glycyl lysine isopeptide (Lys-Gly) (interchain with G-Cter in ubiquitin). Phosphoserine occurs at positions 35 and 50. A compositionally biased stretch (polar residues) spans 50–60 (SETSDAKSTPT). A phosphothreonine mark is found at Thr-58, Thr-60, and Thr-100. Arg-115 is subject to Omega-N-methylarginine. Residues 126 to 137 (SDWTRQQVSSMS) show a composition bias toward polar residues. A compositionally biased stretch (basic and acidic residues) spans 157-172 (RPEDIEKSHPASELLR). Ser-188 is modified (phosphoserine). A compositionally biased stretch (acidic residues) spans 189 to 202 (EEEVDEDLTVDESS). Polar residues predominate over residues 203-212 (QDSPPSQASL). Composition is skewed to basic and acidic residues over residues 270-294 (EEGH…KEQD) and 354-366 (ASKD…EKKA). Residues 413-427 (KHVSSVTPRNGSPGT) show a composition bias toward polar residues. At Thr-445 the chain carries Phosphothreonine. Arg-447 bears the Omega-N-methylarginine mark. Ser-451 carries the phosphoserine modification. N6,N6-dimethyllysine; alternate is present on Lys-455. The residue at position 455 (Lys-455) is an N6-acetyllysine; alternate. Residues Thr-461, Thr-467, and Thr-468 each carry the phosphothreonine modification. At Ser-470 the chain carries Phosphoserine. Position 473 is a phosphothreonine (Thr-473). Phosphoserine is present on residues Ser-477, Ser-483, and Ser-487. Positions 479-506 (EPPKSGERSGYSSPGSPGTPGSRSRTPS) are enriched in low complexity. Tyr-489 is subject to Phosphotyrosine. Phosphoserine occurs at positions 490, 491, and 494. Phosphothreonine is present on residues Thr-497 and Thr-504. Ser-506 is subject to Phosphoserine. A Phosphothreonine modification is found at Thr-509. Lys-517 carries the N6-acetyllysine modification. Thr-523 bears the Phosphothreonine mark. Ser-527, Ser-529, and Ser-531 each carry phosphoserine. 4 Tau/MAP repeats span residues 536–566 (QTAP…GGGK), 567–597 (VQII…GGGS), 598–628 (VQIV…GGGQ), and 629–660 (VEVK…GGGN). Residue Lys-546 forms a Glycyl lysine isopeptide (Lys-Gly) (interchain with G-Cter in ubiquitin) linkage. Lys-551 is subject to N6-acetyllysine; alternate. An N6-methyllysine; alternate modification is found at Lys-551. Residue Lys-551 forms a Glycyl lysine isopeptide (Lys-Gly) (interchain with G-Cter in ubiquitin); alternate linkage. The residue at position 554 (Ser-554) is a Phosphoserine; by MARK1, BRSK1, BRSK2 and PHK. Residue Lys-559 forms a Glycyl lysine isopeptide (Lys-Gly) (interchain with G-Cter in ubiquitin) linkage. Lys-573 is modified (N6-acetyllysine; alternate). Lys-573 participates in a covalent cross-link: Glycyl lysine isopeptide (Lys-Gly) (interchain with G-Cter in ubiquitin); alternate. 2 positions are modified to phosphoserine: Ser-577 and Ser-581. At Lys-582 the chain carries N6-acetyllysine. The cysteines at positions 583 and 614 are disulfide-linked. Residue Ser-585 is modified to Phosphoserine. N6-acetyllysine; alternate is present on Lys-590. Residue Lys-590 forms a Glycyl lysine isopeptide (Lys-Gly) (interchain with G-Cter in ubiquitin); alternate linkage. Ser-597 carries the post-translational modification Phosphoserine. Lys-603 is subject to N6,N6-dimethyllysine; alternate. Lys-603, Lys-609, and Lys-613 each carry N6-acetyllysine; alternate. Residues Lys-603, Lys-609, and Lys-613 each participate in a glycyl lysine isopeptide (Lys-Gly) (interchain with G-Cter in ubiquitin); alternate cross-link. At Ser-616 the chain carries Phosphoserine. 3 positions are modified to N6-acetyllysine; alternate: Lys-623, Lys-635, and Lys-639. Glycyl lysine isopeptide (Lys-Gly) (interchain with G-Cter in ubiquitin); alternate cross-links involve residues Lys-623, Lys-635, and Lys-639. Arg-641 carries the post-translational modification Omega-N-methylarginine. Ser-644 is modified (phosphoserine). Residue Lys-645 forms a Glycyl lysine isopeptide (Lys-Gly) (interchain with G-Cter in ubiquitin) linkage. Residue Ser-648 is modified to Phosphoserine. An N6-acetyllysine; alternate modification is found at Lys-661. Lys-661 is covalently cross-linked (Glycyl lysine isopeptide (Lys-Gly) (interchain with G-Cter in ubiquitin); alternate). Lys-667 is covalently cross-linked (Glycyl lysine isopeptide (Lys-Gly) (interchain with G-Cter in ubiquitin)). Position 677 is an N6-acetyllysine; alternate (Lys-677). Lys-677 participates in a covalent cross-link: Glycyl lysine isopeptide (Lys-Gly) (interchain with G-Cter in ubiquitin); alternate. Tyr-686 carries the phosphotyrosine modification. Ser-688 bears the Phosphoserine mark. The disordered stretch occupies residues 690–709 (VVSGDTSPRHLSNVSSTGSI). Residue Ser-692 is modified to Phosphoserine; alternate. Ser-692 is a glycosylation site (O-linked (GlcNAc...) serine; alternate). Over residues 693-708 (GDTSPRHLSNVSSTGS) the composition is skewed to polar residues. Thr-695 is modified (phosphothreonine). Phosphoserine occurs at positions 696, 701, 708, and 714. Thr-719 is modified (phosphothreonine).

In terms of assembly, interacts with MARK1, MARK2, MARK3 and MARK4. Interacts with SQSTM1 when polyubiquitinated. Interacts with PSMC2 through SQSTM1. Interacts with FKBP4. Binds to CSNK1D. Interacts with SGK1. Interacts with EPM2A; the interaction dephosphorylates MAPT at Ser-369. Interacts with PIN1. Interacts with LRRK2. Interacts with LRP1, leading to endocytosis; this interaction is reduced in the presence of LRPAP1/RAP. In terms of processing, polyubiquitinated. Requires functional TRAF6 and may provoke SQSTM1-dependent degradation by the proteasome. Post-translationally, phosphorylation at various serine and threonine residues in S-P or T-P motifs by proline-directed protein kinases (PDPK1, CDK1, CDK5, GSK3, MAPK) (a few sites per protein in interphase, more in mitosis), and at serine residues in K-X-G-S motifs by MAP/microtubule affinity-regulating kinase (MARK1, MARK2, MARK3, MARK4), causing detachment from microtubules, and their disassembly. Phosphorylated by PHK. Dephosphorylation at several serine and threonine residues by the serine/threonine phosphatase PPP5C. Phosphorylation at Ser-554 by BRSK1 and BRSK2 in neurons affects ability to bind microtubules and plays a role in neuron polarization. Phosphorylation at Ser-188 by SGK1 mediates microtubule depolymerization and neurite formation in hippocampal neurons. Expressed in neurons and at a lower level in the liver and kidney. Isoform PNS-tau is expressed in the peripheral nervous system while the others are expressed in the central nervous system.

Its subcellular location is the cytoplasm. The protein localises to the cytosol. It is found in the cell membrane. It localises to the cytoskeleton. The protein resides in the cell projection. Its subcellular location is the axon. The protein localises to the dendrite. It is found in the secreted. Its function is as follows. Promotes microtubule assembly and stability, and might be involved in the establishment and maintenance of neuronal polarity. The C-terminus binds axonal microtubules while the N-terminus binds neural plasma membrane components, suggesting that tau functions as a linker protein between both. Axonal polarity is predetermined by tau localization (in the neuronal cell) in the domain of the cell body defined by the centrosome. The short isoforms allow plasticity of the cytoskeleton whereas the longer isoforms may preferentially play a role in its stabilization. This Mus musculus (Mouse) protein is Microtubule-associated protein tau.